Reading from the N-terminus, the 192-residue chain is Peptidyl-tRNA hydrolase (192 aa).

Y18 serves as a coordination point for tRNA. H23 acts as the Proton acceptor in catalysis. TRNA-binding residues include F69, N71, and N117.

Belongs to the PTH family. In terms of assembly, monomer.

The protein localises to the cytoplasm. The enzyme catalyses an N-acyl-L-alpha-aminoacyl-tRNA + H2O = an N-acyl-L-amino acid + a tRNA + H(+). Hydrolyzes ribosome-free peptidyl-tRNAs (with 1 or more amino acids incorporated), which drop off the ribosome during protein synthesis, or as a result of ribosome stalling. Its function is as follows. Catalyzes the release of premature peptidyl moieties from peptidyl-tRNA molecules trapped in stalled 50S ribosomal subunits, and thus maintains levels of free tRNAs and 50S ribosomes. In Neisseria gonorrhoeae (strain ATCC 700825 / FA 1090), this protein is Peptidyl-tRNA hydrolase.